The primary structure comprises 206 residues: Anti-sigma-W factor RsiW (206 aa).

Topologically, residues 1 to 87 are cytoplasmic; it reads MSCPEHIVQL…ASINRWLKAH (87 aa). The Zn(2+) site is built by His-30, Cys-34, and Cys-37. A helical transmembrane segment spans residues 88-108; sequence PFLVAAALFAILMGGSFFSSW. The Extracellular portion of the chain corresponds to 109-206; the sequence is KNDHDFSVSS…SVFGVKESKE (98 aa).

The protein belongs to the zinc-associated anti-sigma factor (ZAS) superfamily. Anti-sigma-W factor family. Requires Zn(2+) as cofactor. Post-translationally, is processed by three successive proteolytic events. First, the extracellular region of RsiW is cleaved by PrsW (Site-1 cleavage) in response to cell envelope stresses. Next, it undergoes cleavage at an intramembrane site (Site-2 cleavage) mediated by RasP. This cleavage uncovers a cryptic proteolytic tag with conserved alanine residues in the transmembrane segment, that is recognized mainly by the ClpXP protease, which completely degrades the protein in the cytoplasm and leads to the induction of the sigma-W-controlled genes.

Its subcellular location is the membrane. Functionally, is the anti-sigma factor for SigW. The presence of RsiW leads to the inactivation of SigW, and its proteolytic destruction to sigma-W activation. This chain is Anti-sigma-W factor RsiW (rsiW), found in Bacillus licheniformis (strain ATCC 14580 / DSM 13 / JCM 2505 / CCUG 7422 / NBRC 12200 / NCIMB 9375 / NCTC 10341 / NRRL NRS-1264 / Gibson 46).